The primary structure comprises 228 residues: ATP-dependent dethiobiotin synthetase BioD (228 aa).

12–17 (EIGKTT) contacts ATP. Threonine 16 is a binding site for Mg(2+). Residue lysine 37 is part of the active site. A substrate-binding site is contributed by serine 41. Residues aspartate 54, 116-119 (EGAG), and 205-207 (PRL) contribute to the ATP site. Residues aspartate 54 and glutamate 116 each contribute to the Mg(2+) site.

The protein belongs to the dethiobiotin synthetase family. As to quaternary structure, homodimer. Mg(2+) serves as cofactor.

It localises to the cytoplasm. It catalyses the reaction (7R,8S)-7,8-diammoniononanoate + CO2 + ATP = (4R,5S)-dethiobiotin + ADP + phosphate + 3 H(+). It participates in cofactor biosynthesis; biotin biosynthesis; biotin from 7,8-diaminononanoate: step 1/2. In terms of biological role, catalyzes a mechanistically unusual reaction, the ATP-dependent insertion of CO2 between the N7 and N8 nitrogen atoms of 7,8-diaminopelargonic acid (DAPA, also called 7,8-diammoniononanoate) to form a ureido ring. This chain is ATP-dependent dethiobiotin synthetase BioD, found in Pseudomonas paraeruginosa (strain DSM 24068 / PA7) (Pseudomonas aeruginosa (strain PA7)).